We begin with the raw amino-acid sequence, 848 residues long: Leucine--tRNA ligase (848 aa).

The 'HIGH' region signature appears at 41–51; that stretch reads PYPSGRIHMGH. Residues 619–623 carry the 'KMSKS' region motif; it reads KMSKS. Lys622 lines the ATP pocket.

This sequence belongs to the class-I aminoacyl-tRNA synthetase family.

The protein resides in the cytoplasm. The enzyme catalyses tRNA(Leu) + L-leucine + ATP = L-leucyl-tRNA(Leu) + AMP + diphosphate. The sequence is that of Leucine--tRNA ligase from Roseobacter denitrificans (strain ATCC 33942 / OCh 114) (Erythrobacter sp. (strain OCh 114)).